We begin with the raw amino-acid sequence, 511 residues long: Intermediate cleaving peptidase 55 (511 aa).

Residues D327, D338, H417, E444, and E467 each coordinate Mn(2+).

This sequence belongs to the peptidase M24B family. Mn(2+) is required as a cofactor.

Its subcellular location is the nucleus. The protein localises to the mitochondrion inner membrane. The catalysed reaction is The enzyme cleaves the 36-Pro-Pro-37 bond of cysteine desulfurase (EC 2.8.1.7) removing three amino acid residues (Tyr-Ser-Pro) from the N-terminus after cleavage by mitochondrial processing peptidase.. Functionally, aminopeptidase which cleaves preprotein intermediates that carry destabilizing N-ter amino acid residues after the mitochondrial processing peptidase (MPP) cleavage site and is thus critical for stabilization of the mitochondrial proteome. The sequence is that of Intermediate cleaving peptidase 55 (ICP55) from Saccharomyces cerevisiae (strain ATCC 204508 / S288c) (Baker's yeast).